The chain runs to 218 residues: Uracil-DNA glycosylase (218 aa).

Aspartate 59 serves as the catalytic Proton acceptor.

It belongs to the uracil-DNA glycosylase (UDG) superfamily. UNG family.

It localises to the cytoplasm. The enzyme catalyses Hydrolyzes single-stranded DNA or mismatched double-stranded DNA and polynucleotides, releasing free uracil.. In terms of biological role, excises uracil residues from the DNA which can arise as a result of misincorporation of dUMP residues by DNA polymerase or due to deamination of cytosine. The polypeptide is Uracil-DNA glycosylase (Staphylococcus saprophyticus subsp. saprophyticus (strain ATCC 15305 / DSM 20229 / NCIMB 8711 / NCTC 7292 / S-41)).